The primary structure comprises 347 residues: Probable G-protein coupled receptor 148 (347 aa).

Residues 1–51 lie on the Extracellular side of the membrane; sequence MGDELAPCPVGTTAWPALIQLISKTPCMPQAASNTSLGLGDLRVPSSMLYW. Residue asparagine 34 is glycosylated (N-linked (GlcNAc...) asparagine). A helical membrane pass occupies residues 52–72; that stretch reads LFLPSSLLAAATLAVSPLLLV. Topologically, residues 73 to 85 are cytoplasmic; that stretch reads TILRNQRLRQEPH. Residues 86–106 form a helical membrane-spanning segment; that stretch reads YLLPANILLSDLAYILLHMLI. Residues 107–130 are Extracellular-facing; it reads SSSSLGGWELGRMACGILTDAVFA. A helical transmembrane segment spans residues 131–151; sequence ACTSTILSFTAIVLHTYLAVI. The Cytoplasmic portion of the chain corresponds to 152 to 165; it reads HPLRYLSFMSHGAA. The helical transmembrane segment at 166-186 threads the bilayer; that stretch reads WKAVALIWLVACCFPTFLIWL. Over 187-214 the chain is Extracellular; that stretch reads SKWQDAQLEEQGASYILPPSMGTQPGCG. The chain crosses the membrane as a helical span at residues 215–235; the sequence is LLVIVTYTSILCVLFLCTALI. Residues 236-261 are Cytoplasmic-facing; it reads ANCFWRIYAEAKTSGIWGQGYSRARG. A helical transmembrane segment spans residues 262-282; sequence TLLIHSVLITLYVSTGVVFSL. Residues 283-299 lie on the Extracellular side of the membrane; the sequence is DMVLTRYHHIDSGTHTW. Residues 300 to 322 form a helical membrane-spanning segment; sequence LLAANSEVLMMLPRAMLTYLYLL. Over 323–347 the chain is Cytoplasmic; it reads RYRQLLGMVRGHLPSRRHQAIFTIS.

It belongs to the G-protein coupled receptor 1 family. Expression restricted to nervous system and testis. Is also detected in several tumors types, most notably prostate cancer.

The protein localises to the cell membrane. Orphan receptor. In Homo sapiens (Human), this protein is Probable G-protein coupled receptor 148 (GPR148).